Reading from the N-terminus, the 215-residue chain is uncharacterized protein (215 aa).

S-adenosyl-L-methionine contacts are provided by G53, E74, and D97.

It belongs to the methyltransferase superfamily. YrrT family.

In terms of biological role, could be a S-adenosyl-L-methionine-dependent methyltransferase. This is an uncharacterized protein from Geobacillus thermodenitrificans (strain NG80-2).